A 140-amino-acid polypeptide reads, in one-letter code: Large ribosomal subunit protein uL11 (140 aa).

Belongs to the universal ribosomal protein uL11 family. As to quaternary structure, part of the ribosomal stalk of the 50S ribosomal subunit. Interacts with L10 and the large rRNA to form the base of the stalk. L10 forms an elongated spine to which L12 dimers bind in a sequential fashion forming a multimeric L10(L12)X complex. Post-translationally, one or more lysine residues are methylated.

In terms of biological role, forms part of the ribosomal stalk which helps the ribosome interact with GTP-bound translation factors. The chain is Large ribosomal subunit protein uL11 from Oleidesulfovibrio alaskensis (strain ATCC BAA-1058 / DSM 17464 / G20) (Desulfovibrio alaskensis).